We begin with the raw amino-acid sequence, 439 residues long: Hydrogenobyrinate a,c-diamide synthase (439 aa).

The GATase cobBQ-type domain maps to 247 to 439; sequence RIALAEDGAF…FFHAIARASA (193 aa). Cys-329 serves as the catalytic Nucleophile.

It belongs to the CobB/CbiA family. Mg(2+) serves as cofactor.

It catalyses the reaction hydrogenobyrinate + 2 L-glutamine + 2 ATP + 2 H2O = hydrogenobyrinate a,c-diamide + 2 L-glutamate + 2 ADP + 2 phosphate + 2 H(+). Its pathway is cofactor biosynthesis; adenosylcobalamin biosynthesis; cob(II)yrinate a,c-diamide from precorrin-2 (aerobic route): step 9/10. Catalyzes the ATP-dependent amidation of the two carboxylate groups at positions a and c of hydrogenobyrinate, using either L-glutamine or ammonia as the nitrogen source. This is Hydrogenobyrinate a,c-diamide synthase from Mesorhizobium japonicum (strain LMG 29417 / CECT 9101 / MAFF 303099) (Mesorhizobium loti (strain MAFF 303099)).